Consider the following 327-residue polypeptide: MKTPIRVAVTGAAGQIAYSLLFRIAAGDMLGEDQPVILQLLDIPQSLPSLKGVVMELDDCAFPLLRDITITDDPKTAFRDINIAMLVGARPRTKGMERKDLLEANGTIFRAQGKALDEVAGRDVKVLVVGNPANTNAYITMKNAPSLKPTSFSSMMRLDHNRAVFQLAVKVGQPVSSVRKMIVWGNHSSAQYPDLSHAEVDGHNAADLVNDMAWIETGFIPVIQKRGMEVIEARGSSSAASAANAAICHMRDWVSGTPEGDWVSMGIPSDGSYGIPEGVIYGYPVTCQGGEYKIVPDLEISEFSRMKMQASYRELMGERESIKHLLG.

Residue 11–17 coordinates NAD(+); the sequence is GAAGQIA. The substrate site is built by Arg92 and Arg98. NAD(+)-binding positions include Asn105, Gln112, and 129 to 131; that span reads VGN. Residues Asn131 and Arg162 each coordinate substrate. The Proton acceptor role is filled by His187.

It belongs to the LDH/MDH superfamily. MDH type 2 family.

It catalyses the reaction (S)-malate + NAD(+) = oxaloacetate + NADH + H(+). Its function is as follows. Catalyzes the reversible oxidation of malate to oxaloacetate. The polypeptide is Malate dehydrogenase (Nitrosospira multiformis (strain ATCC 25196 / NCIMB 11849 / C 71)).